The primary structure comprises 457 residues: tRNA-2-methylthio-N(6)-dimethylallyladenosine synthase (457 aa).

The MTTase N-terminal domain maps to 3-120 (KKVYVKTFGC…LPQMIDARRE (118 aa)). 6 residues coordinate [4Fe-4S] cluster: cysteine 12, cysteine 49, cysteine 83, cysteine 157, cysteine 161, and cysteine 164. A Radical SAM core domain is found at 143–377 (RVEGPSAFVS…QATIEENVAR (235 aa)). The TRAM domain occupies 380–447 (QSMLGKVERI…PHSLRGELVL (68 aa)).

It belongs to the methylthiotransferase family. MiaB subfamily. Monomer. [4Fe-4S] cluster serves as cofactor.

The protein localises to the cytoplasm. It catalyses the reaction N(6)-dimethylallyladenosine(37) in tRNA + (sulfur carrier)-SH + AH2 + 2 S-adenosyl-L-methionine = 2-methylsulfanyl-N(6)-dimethylallyladenosine(37) in tRNA + (sulfur carrier)-H + 5'-deoxyadenosine + L-methionine + A + S-adenosyl-L-homocysteine + 2 H(+). In terms of biological role, catalyzes the methylthiolation of N6-(dimethylallyl)adenosine (i(6)A), leading to the formation of 2-methylthio-N6-(dimethylallyl)adenosine (ms(2)i(6)A) at position 37 in tRNAs that read codons beginning with uridine. The protein is tRNA-2-methylthio-N(6)-dimethylallyladenosine synthase of Burkholderia mallei (strain NCTC 10247).